The primary structure comprises 143 residues: Ribonuclease H (143 aa).

The 141-residue stretch at 1-141 (MKHVEIFTDG…VDKLASDAAL (141 aa)) folds into the RNase H type-1 domain. Asp-9, Glu-47, Asp-69, and Asp-133 together coordinate Mg(2+).

Belongs to the RNase H family. In terms of assembly, monomer. Mg(2+) serves as cofactor.

It localises to the cytoplasm. It carries out the reaction Endonucleolytic cleavage to 5'-phosphomonoester.. Endonuclease that specifically degrades the RNA of RNA-DNA hybrids. This Novosphingobium aromaticivorans (strain ATCC 700278 / DSM 12444 / CCUG 56034 / CIP 105152 / NBRC 16084 / F199) protein is Ribonuclease H.